A 657-amino-acid polypeptide reads, in one-letter code: Glycogen debranching enzyme (657 aa).

The active-site Nucleophile is the Asp-336. The active-site Proton donor is Glu-371. The segment covering 458 to 467 (NEANGEENRD) has biased composition (basic and acidic residues). The segment at 458–479 (NEANGEENRDGTNNNYSNNHGK) is disordered.

This sequence belongs to the glycosyl hydrolase 13 family.

It catalyses the reaction Hydrolysis of (1-&gt;6)-alpha-D-glucosidic linkages to branches with degrees of polymerization of three or four glucose residues in limit dextrin.. It participates in glycan degradation; glycogen degradation. In terms of biological role, removes maltotriose and maltotetraose chains that are attached by 1,6-alpha-linkage to the limit dextrin main chain, generating a debranched limit dextrin. This is Glycogen debranching enzyme from Shigella boydii serotype 18 (strain CDC 3083-94 / BS512).